Here is a 721-residue protein sequence, read N- to C-terminus: Polyribonucleotide nucleotidyltransferase (721 aa).

Mg(2+) contacts are provided by Asp-495 and Asp-501. In terms of domain architecture, KH spans 562–621 (PRLLSFRIDPELIGTVIGPGGRTIKNITERTNTKIDIEDSGIVTIASHDGAAAEEAQKII). In terms of domain architecture, S1 motif spans 631–699 (GEVFTGSITR…NRGRINLTLR (69 aa)). A disordered region spans residues 700–721 (GVPQSGESADSQPAPTPVAPLS).

It belongs to the polyribonucleotide nucleotidyltransferase family. Mg(2+) is required as a cofactor.

The protein resides in the cytoplasm. The catalysed reaction is RNA(n+1) + phosphate = RNA(n) + a ribonucleoside 5'-diphosphate. In terms of biological role, involved in mRNA degradation. Catalyzes the phosphorolysis of single-stranded polyribonucleotides processively in the 3'- to 5'-direction. This Synechococcus sp. (strain CC9311) protein is Polyribonucleotide nucleotidyltransferase.